The chain runs to 187 residues: TATA-box-binding protein (187 aa).

2 repeat units span residues 10 to 86 and 101 to 179.

This sequence belongs to the TBP family.

Its function is as follows. General factor that plays a role in the activation of archaeal genes transcribed by RNA polymerase. Binds specifically to the TATA box promoter element which lies close to the position of transcription initiation. The chain is TATA-box-binding protein from Natronomonas pharaonis (strain ATCC 35678 / DSM 2160 / CIP 103997 / JCM 8858 / NBRC 14720 / NCIMB 2260 / Gabara) (Halobacterium pharaonis).